The following is a 920-amino-acid chain: Plasma membrane ATPase (920 aa).

The tract at residues 1 to 77 (MADHSASGAP…TPGGGRVVPE (77 aa)) is disordered. Residues 1 to 115 (MADHSASGAP…KEEKENHFLK (115 aa)) are Cytoplasmic-facing. Residues 38-51 (EDDEDEDIDALIED) show a composition bias toward acidic residues. Residues 116–138 (FLGFFVGPIQFVMEGAAVLAAGL) traverse the membrane as a helical segment. Topologically, residues 139–140 (ED) are extracellular. Residues 141 to 160 (WVDFGVICGLLLLNAVVGFV) form a helical membrane-spanning segment. Residues 161-291 (QEFQAGSIVD…GSGHFTEVLN (131 aa)) are Cytoplasmic-facing. The chain crosses the membrane as a helical span at residues 292-314 (GIGTILLILVIFTLLIVWVSSFY). Residues 315 to 321 (RSNPIVQ) are Extracellular-facing. A helical transmembrane segment spans residues 322-354 (ILEFTLAITIIGVPVGLPAVVTTTMAVGAAYLA). The Cytoplasmic portion of the chain corresponds to 355–687 (KKKAIVQKLS…LKTSRQIFHR (333 aa)). D378 serves as the catalytic 4-aspartylphosphate intermediate. Mg(2+) contacts are provided by D634 and D638. The chain crosses the membrane as a helical span at residues 688 to 713 (MYAYVVYRIALSIHLEIFLGLWIAIL). The Extracellular segment spans residues 714 to 720 (NRSLNIE). A helical transmembrane segment spans residues 721–738 (LVVFIAIFADVATLAIAY). Residues 739 to 754 (DNAPYSQTPVKWNLPK) are Cytoplasmic-facing. A helical transmembrane segment spans residues 755–779 (LWGMSVLLGVVLAVGTWITVTTMYA). Over 780–806 (QGENGGIVQNFGNMDEVLFLQISLTEN) the chain is Extracellular. Helical transmembrane passes span 807–826 (WLIF…PSWQ) and 827–847 (LSGA…WGWF). Over 848–853 (EHSDTS) the chain is Extracellular. Residues 854–878 (IVAVVRIWIFSFGIFCIMGGVYYIL) traverse the membrane as a helical segment. The Cytoplasmic portion of the chain corresponds to 879-920 (QDSVGFDNLMHGKSPKGNQKQRSLEDFVVSLQRVSTQHEKSQ).

It belongs to the cation transport ATPase (P-type) (TC 3.A.3) family. Type IIIA subfamily.

The protein resides in the cell membrane. It catalyses the reaction ATP + H2O + H(+)(in) = ADP + phosphate + 2 H(+)(out). Functionally, the plasma membrane ATPase of plants and fungi is a hydrogen ion pump. The proton gradient it generates drives the active transport of nutrients by H(+)-symport. The resulting external acidification and/or internal alkinization may mediate growth responses. The polypeptide is Plasma membrane ATPase (pma-1) (Neurospora crassa (strain ATCC 24698 / 74-OR23-1A / CBS 708.71 / DSM 1257 / FGSC 987)).